Here is an 889-residue protein sequence, read N- to C-terminus: Phosphatidylinositol 3-kinase VPS34 (889 aa).

The C2 PI3K-type domain occupies 34-184 (ASEKLIDPQL…EWIDELVLKK (151 aa)). In terms of domain architecture, PIK helical spans 298-540 (SDKHVKPDAK…ESFLSRLNSN (243 aa)). The region spanning 607–873 (MIDQCNVFKS…LINDSVNALL (267 aa)) is the PI3K/PI4K catalytic domain. Positions 613 to 619 (VFKSSLS) are G-loop. The segment at 742 to 750 (GVGDRHLDN) is catalytic loop. An activation loop region spans residues 761–782 (HADFGYILGQDPKPFPPLMKLP).

Belongs to the PI3/PI4-kinase family. Type III PI4K subfamily. In terms of assembly, component of the autophagy-specific VPS34 PI3-kinase complex I composed of VPS15, VPS30, VPS34, ATG14 and ATG38; and of the VPS34 PI3-kinase complex II composed of VPS15, VPS30, VPS34 and VPS38. In terms of processing, autophosphorylated.

It is found in the golgi apparatus. It localises to the trans-Golgi network membrane. The protein resides in the endosome membrane. It carries out the reaction a 1,2-diacyl-sn-glycero-3-phospho-(1D-myo-inositol) + ATP = a 1,2-diacyl-sn-glycero-3-phospho-(1D-myo-inositol-3-phosphate) + ADP + H(+). Its function is as follows. Multifunctional phosphatidylinositol 3-kinase that plays a role in signaling in modulation of host immune response, intracellular survival and virulence. Catalytic subunit of the autophagy-specific VPS34 PI3-kinase complex I essential to recruit the ATG8-phosphatidylinositol conjugate and the ATG12-ATG5 conjugate to the pre-autophagosomal structure. Also involved in endosome-to-Golgi retrograde transport as part of the VPS34 PI3-kinase complex II. This second complex is required for the endosome-to-Golgi retrieval of PEP1 and KEX2, and the recruitment of VPS5 and VPS7, two components of the retromer complex, to endosomal membranes (probably through the synthesis of a specific pool of phosphatidylinositol 3-phosphate recruiting the retromer to the endosomes). Finally, it might also be involved in ethanol tolerance and cell wall integrity. This is Phosphatidylinositol 3-kinase VPS34 from Candida glabrata (strain ATCC 2001 / BCRC 20586 / JCM 3761 / NBRC 0622 / NRRL Y-65 / CBS 138) (Yeast).